A 368-amino-acid polypeptide reads, in one-letter code: tRNA-specific 2-thiouridylase MnmA (368 aa).

ATP contacts are provided by residues 6 to 13 (ALSGGVDS) and methionine 32. Residue cysteine 92 is the Nucleophile of the active site. Residues cysteine 92 and cysteine 186 are joined by a disulfide bond. Glycine 116 lines the ATP pocket. The tract at residues 134-136 (KDQ) is interaction with tRNA. Residue cysteine 186 is the Cysteine persulfide intermediate of the active site. The tract at residues 292–293 (RY) is interaction with tRNA.

It belongs to the MnmA/TRMU family.

Its subcellular location is the cytoplasm. It catalyses the reaction S-sulfanyl-L-cysteinyl-[protein] + uridine(34) in tRNA + AH2 + ATP = 2-thiouridine(34) in tRNA + L-cysteinyl-[protein] + A + AMP + diphosphate + H(+). Catalyzes the 2-thiolation of uridine at the wobble position (U34) of tRNA, leading to the formation of s(2)U34. This is tRNA-specific 2-thiouridylase MnmA from Campylobacter hominis (strain ATCC BAA-381 / DSM 21671 / CCUG 45161 / LMG 19568 / NCTC 13146 / CH001A).